The following is a 963-amino-acid chain: Kinesin-1 heavy chain (963 aa).

Ala2 is modified (N-acetylalanine). The region spanning Asn8–Ile325 is the Kinesin motor domain. Gly85–Thr92 is an ATP binding site. Lys213 is covalently cross-linked (Glycyl lysine isopeptide (Lys-Gly) (interchain with G-Cter in SUMO2)). Residues Val329–Arg914 are a coiled coil. The disordered stretch occupies residues Ser908–Val963. Residues Gly915–Val963 are globular. The residue at position 933 (Ser933) is a Phosphoserine. Omega-N-methylarginine is present on Arg956.

It belongs to the TRAFAC class myosin-kinesin ATPase superfamily. Kinesin family. Kinesin subfamily. Oligomer composed of two heavy chains and two light chains. Interacts with GRIP1 and PPP1R42. Interacts with SYBU. Interacts with JAKMIP1. Interacts with PLEKHM2. Interacts with ECPAS. Interacts with ZFYVE27. Found in a complex with OGT, RHOT1, RHOT2 and TRAK1. Interacts with APP (via cytoplasmic domain).

The protein resides in the cytoplasm. The protein localises to the cytoskeleton. It localises to the cytolytic granule membrane. Its subcellular location is the lysosome membrane. Its function is as follows. Microtubule-dependent motor required for normal distribution of mitochondria and lysosomes. Can induce formation of neurite-like membrane protrusions in non-neuronal cells in a ZFYVE27-dependent manner. Regulates centrosome and nuclear positioning during mitotic entry. During the G2 phase of the cell cycle in a BICD2-dependent manner, antagonizes dynein function and drives the separation of nuclei and centrosomes. Required for anterograde axonal transportation of MAPK8IP3/JIP3 which is essential for MAPK8IP3/JIP3 function in axon elongation. Through binding with PLEKHM2 and ARL8B, directs lysosome movement toward microtubule plus ends. Involved in NK cell-mediated cytotoxicity. Drives the polarization of cytolytic granules and microtubule-organizing centers (MTOCs) toward the immune synapse between effector NK lymphocytes and target cells. This Homo sapiens (Human) protein is Kinesin-1 heavy chain.